The primary structure comprises 335 residues: Dihydroorotate dehydrogenase (quinone) (335 aa).

FMN contacts are provided by residues 59–63 (AGLDK) and Thr-83. Lys-63 contacts substrate. 108-112 (NRMGF) is a substrate binding site. Residues Asn-136 and Asn-169 each coordinate FMN. Asn-169 is a binding site for substrate. Catalysis depends on Ser-172, which acts as the Nucleophile. Substrate is bound at residue Asn-174. FMN is bound by residues Lys-214 and Thr-242. 243–244 (NT) is a binding site for substrate. FMN is bound by residues Gly-265, Gly-294, and 315–316 (YS).

It belongs to the dihydroorotate dehydrogenase family. Type 2 subfamily. As to quaternary structure, monomer. FMN is required as a cofactor.

Its subcellular location is the cell membrane. It carries out the reaction (S)-dihydroorotate + a quinone = orotate + a quinol. The protein operates within pyrimidine metabolism; UMP biosynthesis via de novo pathway; orotate from (S)-dihydroorotate (quinone route): step 1/1. Its function is as follows. Catalyzes the conversion of dihydroorotate to orotate with quinone as electron acceptor. The protein is Dihydroorotate dehydrogenase (quinone) of Neisseria meningitidis serogroup C / serotype 2a (strain ATCC 700532 / DSM 15464 / FAM18).